The following is a 490-amino-acid chain: Serine hydroxymethyltransferase (490 aa).

Residues Leu179 and 183–185 (GHL) each bind (6S)-5,6,7,8-tetrahydrofolate. N6-(pyridoxal phosphate)lysine is present on Lys291. An Isoglutamyl lysine isopeptide (Lys-Gln) (interchain with Q-Cter in protein Pup) cross-link involves residue Lys362.

The protein belongs to the SHMT family. Homodimer. Pyridoxal 5'-phosphate serves as cofactor.

The protein localises to the cytoplasm. The catalysed reaction is (6R)-5,10-methylene-5,6,7,8-tetrahydrofolate + glycine + H2O = (6S)-5,6,7,8-tetrahydrofolate + L-serine. It participates in one-carbon metabolism; tetrahydrofolate interconversion. The protein operates within amino-acid biosynthesis; glycine biosynthesis; glycine from L-serine: step 1/1. Functionally, catalyzes the reversible interconversion of serine and glycine with tetrahydrofolate (THF) serving as the one-carbon carrier. This reaction serves as the major source of one-carbon groups required for the biosynthesis of purines, thymidylate, methionine, and other important biomolecules. Also exhibits THF-independent aldolase activity toward beta-hydroxyamino acids, producing glycine and aldehydes, via a retro-aldol mechanism. The chain is Serine hydroxymethyltransferase from Mycolicibacterium smegmatis (strain ATCC 700084 / mc(2)155) (Mycobacterium smegmatis).